The following is a 159-amino-acid chain: Fimbrial protein MyfA (159 aa).

An N-terminal signal peptide occupies residues 1–29 (MNMKKFVKKPLAIAVLMLASGGMVNMVHA).

As to quaternary structure, forms a homomer composed of subunits assembled in a large structure resistant to proteases and chaotropic agents.

It localises to the fimbrium. Major pilus subunit. Expressed only in pathogenic serotypes, it is part of myf, a probable virulence factor. The polypeptide is Fimbrial protein MyfA (myfA) (Yersinia enterocolitica).